Consider the following 318-residue polypeptide: Thymidylate synthase (318 aa).

DUMP contacts are provided by residues Arg-25 and 180–181 (RR). Cys-200 serves as the catalytic Nucleophile. Residues 220–223 (RSGD), Asn-231, and 261–263 (HIY) contribute to the dUMP site. Residue Asp-223 participates in (6R)-5,10-methylene-5,6,7,8-tetrahydrofolate binding. (6R)-5,10-methylene-5,6,7,8-tetrahydrofolate is bound at residue Ala-317.

This sequence belongs to the thymidylate synthase family. Bacterial-type ThyA subfamily. As to quaternary structure, homodimer.

It localises to the cytoplasm. The enzyme catalyses dUMP + (6R)-5,10-methylene-5,6,7,8-tetrahydrofolate = 7,8-dihydrofolate + dTMP. Its pathway is pyrimidine metabolism; dTTP biosynthesis. Functionally, catalyzes the reductive methylation of 2'-deoxyuridine-5'-monophosphate (dUMP) to 2'-deoxythymidine-5'-monophosphate (dTMP) while utilizing 5,10-methylenetetrahydrofolate (mTHF) as the methyl donor and reductant in the reaction, yielding dihydrofolate (DHF) as a by-product. This enzymatic reaction provides an intracellular de novo source of dTMP, an essential precursor for DNA biosynthesis. The chain is Thymidylate synthase from Lactobacillus gasseri (strain ATCC 33323 / DSM 20243 / BCRC 14619 / CIP 102991 / JCM 1131 / KCTC 3163 / NCIMB 11718 / NCTC 13722 / AM63).